Here is a 586-residue protein sequence, read N- to C-terminus: Dihydroxy-acid dehydratase 2 (586 aa).

Residue Cys-68 coordinates [2Fe-2S] cluster. Asp-100 contributes to the Mg(2+) binding site. Residue Cys-141 participates in [2Fe-2S] cluster binding. The Mg(2+) site is built by Asp-142 and Lys-143. N6-carboxylysine is present on Lys-143. Position 213 (Cys-213) interacts with [2Fe-2S] cluster. Glu-463 provides a ligand contact to Mg(2+). Residue Ser-489 is the Proton acceptor of the active site.

The protein belongs to the IlvD/Edd family. In terms of assembly, homodimer. [2Fe-2S] cluster is required as a cofactor. Mg(2+) serves as cofactor.

The catalysed reaction is (2R)-2,3-dihydroxy-3-methylbutanoate = 3-methyl-2-oxobutanoate + H2O. The enzyme catalyses (2R,3R)-2,3-dihydroxy-3-methylpentanoate = (S)-3-methyl-2-oxopentanoate + H2O. The protein operates within amino-acid biosynthesis; L-isoleucine biosynthesis; L-isoleucine from 2-oxobutanoate: step 3/4. It participates in amino-acid biosynthesis; L-valine biosynthesis; L-valine from pyruvate: step 3/4. Functions in the biosynthesis of branched-chain amino acids. Catalyzes the dehydration of (2R,3R)-2,3-dihydroxy-3-methylpentanoate (2,3-dihydroxy-3-methylvalerate) into 2-oxo-3-methylpentanoate (2-oxo-3-methylvalerate) and of (2R)-2,3-dihydroxy-3-methylbutanoate (2,3-dihydroxyisovalerate) into 2-oxo-3-methylbutanoate (2-oxoisovalerate), the penultimate precursor to L-isoleucine and L-valine, respectively. The protein is Dihydroxy-acid dehydratase 2 of Mesorhizobium japonicum (strain LMG 29417 / CECT 9101 / MAFF 303099) (Mesorhizobium loti (strain MAFF 303099)).